The sequence spans 451 residues: tRNA modification GTPase MnmE (451 aa).

(6S)-5-formyl-5,6,7,8-tetrahydrofolate is bound by residues Arg-28, Glu-85, and Lys-124. The TrmE-type G domain occupies 220-373; it reads GLYTVLVGPP…LKTRLRTLLL (154 aa). Residue Asn-230 participates in K(+) binding. Residues 230-235, 249-255, and 274-277 each bind GTP; these read NVGKSS, TDVPGTT, and DTAG. Position 234 (Ser-234) interacts with Mg(2+). The K(+) site is built by Thr-249, Val-251, and Thr-254. Thr-255 is a Mg(2+) binding site. Lys-451 contributes to the (6S)-5-formyl-5,6,7,8-tetrahydrofolate binding site.

This sequence belongs to the TRAFAC class TrmE-Era-EngA-EngB-Septin-like GTPase superfamily. TrmE GTPase family. Homodimer. Heterotetramer of two MnmE and two MnmG subunits. The cofactor is K(+).

It is found in the cytoplasm. Functionally, exhibits a very high intrinsic GTPase hydrolysis rate. Involved in the addition of a carboxymethylaminomethyl (cmnm) group at the wobble position (U34) of certain tRNAs, forming tRNA-cmnm(5)s(2)U34. This Xylella fastidiosa (strain Temecula1 / ATCC 700964) protein is tRNA modification GTPase MnmE.